The following is a 730-amino-acid chain: ATP-binding cassette sub-family D member 1 (730 aa).

Transmembrane regions (helical) follow at residues 24–44, 137–157, 169–189, and 276–296; these read AFSY…VTIP, FCLI…GALV, ALVL…NSMI, and ANII…AHIL. Positions 136–373 constitute an ABC transmembrane type-1 domain; sequence TFCLISRTFL…WFIMLEQFFM (238 aa). The region spanning 505-727 is the ABC transporter domain; the sequence is ISLRAVPVVT…MNSDEEQKGQ (223 aa). 538–545 provides a ligand contact to ATP; that stretch reads GPNGCGKS.

Belongs to the ABC transporter superfamily. ABCD family. Peroxisomal fatty acyl CoA transporter (TC 3.A.1.203) subfamily.

It localises to the peroxisome membrane. The catalysed reaction is an acyl-CoA(out) + ATP + H2O = an acyl-CoA(in) + ADP + phosphate + H(+). Functionally, plays a role in the transport of free very-long-chain fatty acids (VLCFAs) as well as their CoA-esters across the peroxisomal membrane by acting as an ATP-specific binding subunit releasing ADP after ATP hydrolysis. Thus, plays a role in regulation of VLCFAs and energy metabolism namely, in the degradation and biosynthesis of fatty acids by beta-oxidation, mitochondrial function and microsomal fatty acid elongation. This is ATP-binding cassette sub-family D member 1 from Drosophila melanogaster (Fruit fly).